A 448-amino-acid polypeptide reads, in one-letter code: Exodeoxyribonuclease 7 large subunit (448 aa).

It belongs to the XseA family. Heterooligomer composed of large and small subunits.

Its subcellular location is the cytoplasm. It catalyses the reaction Exonucleolytic cleavage in either 5'- to 3'- or 3'- to 5'-direction to yield nucleoside 5'-phosphates.. In terms of biological role, bidirectionally degrades single-stranded DNA into large acid-insoluble oligonucleotides, which are then degraded further into small acid-soluble oligonucleotides. This chain is Exodeoxyribonuclease 7 large subunit, found in Nitrosomonas europaea (strain ATCC 19718 / CIP 103999 / KCTC 2705 / NBRC 14298).